The primary structure comprises 157 residues: Protein Smg (157 aa).

Belongs to the Smg family.

In Serratia proteamaculans (strain 568), this protein is Protein Smg.